The primary structure comprises 510 residues: Serine carboxypeptidase 1 (510 aa).

A signal peptide spans 1-25 (MARRGRRSLASPAVAIALFVFLAYG). Positions 26-36 (GGGGGGGVCEA) are excised as a propeptide. Disulfide bonds link Cys98-Cys399, Cys262-Cys274, and Cys297-Cys366. N-linked (GlcNAc...) asparagine glycosylation occurs at Asn154. Ser194 is an active-site residue. N-linked (GlcNAc...) asparagine glycosylation occurs at Asn268. The propeptide at 303–362 (IKKVTPANTKLPKSFQHLGTTTKPLAVRTRMHGRAWPLRAPVRAGRVPSWQEFARGSRPS) is linker peptide. Asn418 carries an N-linked (GlcNAc...) asparagine glycan. Active-site residues include Asp434 and His487. The Microbody targeting signal motif lies at 508–510 (SKL).

Belongs to the peptidase S10 family.

It carries out the reaction Release of a C-terminal amino acid with broad specificity.. This Oryza sativa subsp. japonica (Rice) protein is Serine carboxypeptidase 1 (CBP1).